Reading from the N-terminus, the 413-residue chain is MADWQEITGGITAPKGYRAAGITAGLKPSGLPDLALIVSDVEAIASGVFTTSQVKAACVDYCRQRLQAKQSARAILCNAGQANAATGSQGIKDAEESAELLAKELNISPELILLASTGVIGQRIKMDALRNGIPKLIASLTDTGSDAAAGAIITTDLVTKSIALETTIGDRPVRIGGIAKGSGMIHPNMATMLAFVTCDAAVSSHLWQQMLTRAADRSFNSITVDGDTSTNDSLIALANGQSRTPAITEVGAESEKLEAMLTAVCQHLAKAIARDGEGATCLIEVQVTGAHDEQAARQIAKTIAGSSLVKSAIFGRDPNWGRIAAAAGRAGVPFEQENLQIQLGDFLLLDNGQPLPFDRAAASAYLKQAATGAYLQQDTVLISVKVGNGHGTGKAWGCDLSYDYVKINAEYTT.

The substrate site is built by Thr-154, Lys-180, Thr-191, Glu-277, Asn-408, and Thr-413. Residue Thr-191 is the Nucleophile of the active site.

Belongs to the ArgJ family. Heterotetramer of two alpha and two beta chains.

The protein localises to the cytoplasm. It carries out the reaction N(2)-acetyl-L-ornithine + L-glutamate = N-acetyl-L-glutamate + L-ornithine. The catalysed reaction is L-glutamate + acetyl-CoA = N-acetyl-L-glutamate + CoA + H(+). The protein operates within amino-acid biosynthesis; L-arginine biosynthesis; L-ornithine and N-acetyl-L-glutamate from L-glutamate and N(2)-acetyl-L-ornithine (cyclic): step 1/1. It participates in amino-acid biosynthesis; L-arginine biosynthesis; N(2)-acetyl-L-ornithine from L-glutamate: step 1/4. Its function is as follows. Catalyzes two activities which are involved in the cyclic version of arginine biosynthesis: the synthesis of N-acetylglutamate from glutamate and acetyl-CoA as the acetyl donor, and of ornithine by transacetylation between N(2)-acetylornithine and glutamate. The protein is Arginine biosynthesis bifunctional protein ArgJ 1 of Nostoc sp. (strain PCC 7120 / SAG 25.82 / UTEX 2576).